A 488-amino-acid chain; its full sequence is Metalloreductase STEAP3 (488 aa).

At 1 to 207 (MSGEMDKPLI…AREVEAIPLR (207 aa)) the chain is on the cytoplasmic side. Residues Ser-11, Ser-17, and Ser-20 each carry the phosphoserine modification. Residues 36-39 (SGDF), 58-59 (SR), 91-98 (VFREHYSS), Asn-116, and Ala-151 contribute to the NADP(+) site. Residues Trp-152 and Asp-160 each contribute to the FAD site. Residues 208–228 (LLPSWKVPTLLALGLFVCFYA) traverse the membrane as a helical segment. A Fe(3+)-binding site is contributed by Tyr-229. Residues 229–258 (YNFIRDVLQPYIRKDENKFYKMPLSVVNTT) lie on the Vesicular side of the membrane. N-linked (GlcNAc...) asparagine glycosylation is present at Asn-256. A helical membrane pass occupies residues 259-279 (LPCVAYVLLSLVYLPGVLAAA). The region spanning 259 to 407 (LPCVAYVLLS…LGFVALMLST (149 aa)) is the Ferric oxidoreductase domain. Over 280 to 304 (LQLRRGTKYQRFPDWLDHWLQHRKQ) the chain is Cytoplasmic. Positions 281, 302, and 303 each coordinate FAD. Residues 305 to 325 (IGLLSFFFAMLHALYSFCLPL) traverse the membrane as a helical segment. His-316 contributes to the heme b binding site. Residue Tyr-319 participates in Fe(3+) binding. Topologically, residues 326–358 (RRSHRYDLVNLAVKQVLANKSRLWVEEEVWRME) are vesicular. A helical membrane pass occupies residues 359 to 379 (IYLSLGVLALGMLSLLAVTSI). Ser-378 is an FAD binding site. Over 380 to 390 (PSIANSLNWKE) the chain is Cytoplasmic. Residues 391–411 (FSFVQSTLGFVALMLSTMHTL) traverse the membrane as a helical segment. Gln-395 serves as a coordination point for FAD. Residue His-409 participates in heme b binding. At 412 to 433 (TYGWTRAFEENHYKFYLPPTFT) the chain is on the vesicular side. A helical membrane pass occupies residues 434 to 454 (LTLLLPCVIILAKGLFLLPCL). At 455-488 (SHRLTKIRRGWERDGAVKFMLPAGHTQGEKTSHV) the chain is on the cytoplasmic side. Position 486 is a phosphoserine (Ser-486).

It belongs to the STEAP family. In terms of assembly, homodimer. Interacts with BNIP3L, MYT1, RHBDL4/RHBDD1 and TCTP. FAD serves as cofactor. The cofactor is heme b. Post-translationally, proteolytically cleaved by RHBDL4/RHBDD1. RHBDL4/RHBDD1-induced cleavage occurs at multiple sites in a glycosylation-independent manner. In terms of processing, glycosylated.

The protein resides in the endosome membrane. It carries out the reaction 2 Fe(2+) + NADP(+) + H(+) = 2 Fe(3+) + NADPH. The enzyme catalyses 2 Cu(+) + NADP(+) + H(+) = 2 Cu(2+) + NADPH. Functionally, integral membrane protein that functions as a NADPH-dependent ferric-chelate reductase, using NADPH from one side of the membrane to reduce a Fe(3+) chelate that is bound on the other side of the membrane. Mediates sequential transmembrane electron transfer from NADPH to FAD and onto heme, and finally to the Fe(3+) chelate. Can also reduce Cu(2+) to Cu(1+). Mediates efficient transferrin-dependent iron uptake in erythroid cells. May play a role downstream of p53/TP53 to interface apoptosis and cell cycle progression. Indirectly involved in exosome secretion by facilitating the secretion of proteins such as TCTP. In Rattus norvegicus (Rat), this protein is Metalloreductase STEAP3 (Steap3).